The primary structure comprises 322 residues: Phosphatidylserine decarboxylase proenzyme (322 aa).

Residues Asp-90, His-147, and Ser-254 each act as charge relay system; for autoendoproteolytic cleavage activity in the active site. Ser-254 functions as the Schiff-base intermediate with substrate; via pyruvic acid; for decarboxylase activity in the catalytic mechanism. Ser-254 is subject to Pyruvic acid (Ser); by autocatalysis.

This sequence belongs to the phosphatidylserine decarboxylase family. PSD-B subfamily. Prokaryotic type I sub-subfamily. As to quaternary structure, heterodimer of a large membrane-associated beta subunit and a small pyruvoyl-containing alpha subunit. Pyruvate is required as a cofactor. Is synthesized initially as an inactive proenzyme. Formation of the active enzyme involves a self-maturation process in which the active site pyruvoyl group is generated from an internal serine residue via an autocatalytic post-translational modification. Two non-identical subunits are generated from the proenzyme in this reaction, and the pyruvate is formed at the N-terminus of the alpha chain, which is derived from the carboxyl end of the proenzyme. The autoendoproteolytic cleavage occurs by a canonical serine protease mechanism, in which the side chain hydroxyl group of the serine supplies its oxygen atom to form the C-terminus of the beta chain, while the remainder of the serine residue undergoes an oxidative deamination to produce ammonia and the pyruvoyl prosthetic group on the alpha chain. During this reaction, the Ser that is part of the protease active site of the proenzyme becomes the pyruvoyl prosthetic group, which constitutes an essential element of the active site of the mature decarboxylase.

Its subcellular location is the cell membrane. It carries out the reaction a 1,2-diacyl-sn-glycero-3-phospho-L-serine + H(+) = a 1,2-diacyl-sn-glycero-3-phosphoethanolamine + CO2. Its pathway is phospholipid metabolism; phosphatidylethanolamine biosynthesis; phosphatidylethanolamine from CDP-diacylglycerol: step 2/2. Its function is as follows. Catalyzes the formation of phosphatidylethanolamine (PtdEtn) from phosphatidylserine (PtdSer). The polypeptide is Phosphatidylserine decarboxylase proenzyme (Shigella dysenteriae serotype 1 (strain Sd197)).